The sequence spans 100 residues: Urease subunit gamma (100 aa).

This sequence belongs to the urease gamma subunit family. As to quaternary structure, heterotrimer of UreA (gamma), UreB (beta) and UreC (alpha) subunits. Three heterotrimers associate to form the active enzyme.

The protein localises to the cytoplasm. The enzyme catalyses urea + 2 H2O + H(+) = hydrogencarbonate + 2 NH4(+). The protein operates within nitrogen metabolism; urea degradation; CO(2) and NH(3) from urea (urease route): step 1/1. The protein is Urease subunit gamma of Verminephrobacter eiseniae (strain EF01-2).